The following is a 337-amino-acid chain: ATP-dependent (S)-NAD(P)H-hydrate dehydratase (337 aa).

Position 6 is a phosphoserine (Ser-6). A YjeF C-terminal domain is found at 11–335 (IKLAQKRCIP…DRVGEVFAKL (325 aa)). (6S)-NADPHX contacts are provided by residues Gly-121 and 182–188 (NVVEFKR). Residues 218 to 222 (KGQSD) and 240 to 249 (GSNKRVGGQG) each bind ATP. Residues 224–246 (IFSPDSEKDMLTNSEEGSNKRVG) are disordered. Asp-250 serves as a coordination point for (6S)-NADPHX.

It belongs to the NnrD/CARKD family. Mg(2+) serves as cofactor.

It is found in the cytoplasm. It catalyses the reaction (6S)-NADHX + ATP = ADP + phosphate + NADH + H(+). It carries out the reaction (6S)-NADPHX + ATP = ADP + phosphate + NADPH + H(+). In terms of biological role, catalyzes the dehydration of the S-form of NAD(P)HX at the expense of ATP, which is converted to ADP. Together with NAD(P)HX epimerase, which catalyzes the epimerization of the S- and R-forms, the enzyme allows the repair of both epimers of NAD(P)HX, a damaged form of NAD(P)H that is a result of enzymatic or heat-dependent hydration. In Saccharomyces cerevisiae (strain ATCC 204508 / S288c) (Baker's yeast), this protein is ATP-dependent (S)-NAD(P)H-hydrate dehydratase.